A 235-amino-acid polypeptide reads, in one-letter code: Myc target protein 1 (235 aa).

Positions 95 to 113 (RRRRASAPISQWSSSRRSR) match the Bipartite nuclear localization signal motif. 4 positions are modified to phosphoserine: Ser-135, Ser-138, Ser-141, and Ser-149.

Belongs to the MYCT1 family. In terms of tissue distribution, down-regulated in gastric cancer tissues.

The protein localises to the nucleus. In terms of biological role, may regulate certain MYC target genes, MYC seems to be a direct upstream transcriptional activator. Does not seem to significantly affect growth cell capacity. Overexpression seems to mediate many of the known phenotypic features associated with MYC, including promotion of apoptosis, alteration of morphology, enhancement of anchorage-independent growth, tumorigenic conversion, promotion of genomic instability, and inhibition of hematopoietic differentiation. The chain is Myc target protein 1 (MYCT1) from Homo sapiens (Human).